We begin with the raw amino-acid sequence, 397 residues long: Elongation factor Tu (397 aa).

Residues 10-207 (KPHVNIGTLG…AVDNNIPDPV (198 aa)) form the tr-type G domain. Positions 19 to 26 (GHVDHGKT) are G1. 19–26 (GHVDHGKT) provides a ligand contact to GTP. Threonine 26 contacts Mg(2+). Residues 63–67 (GITIN) are G2. The tract at residues 84–87 (DAPG) is G3. GTP-binding positions include 84-88 (DAPGH) and 139-142 (NKSD). Residues 139 to 142 (NKSD) are G4. The tract at residues 177–179 (SGL) is G5.

Belongs to the TRAFAC class translation factor GTPase superfamily. Classic translation factor GTPase family. EF-Tu/EF-1A subfamily. Monomer.

The protein localises to the cytoplasm. The catalysed reaction is GTP + H2O = GDP + phosphate + H(+). Functionally, GTP hydrolase that promotes the GTP-dependent binding of aminoacyl-tRNA to the A-site of ribosomes during protein biosynthesis. In Leifsonia xyli subsp. xyli (strain CTCB07), this protein is Elongation factor Tu.